The sequence spans 156 residues: MYRIGIGQDAHYFEKGKKLYLGGEEFDIGYGLKGHSDGDALLHAITDAILGALAKTDIGTLFPDKSKENKNRNSVDFLNKALEIMYDMDYSIVNLDCNIIADKPNISSVRDKIIESLSRLLSIPKDNISIKAKTKEGYNKEDSLEVVCIALLQKMI.

A divalent metal cation contacts are provided by Asp-9 and His-11. 4-CDP-2-C-methyl-D-erythritol 2-phosphate is bound by residues Asp-9–His-11 and His-35–Ser-36. His-43 is a binding site for a divalent metal cation. Asp-57 to Gly-59 contacts 4-CDP-2-C-methyl-D-erythritol 2-phosphate.

This sequence belongs to the IspF family. In terms of assembly, homotrimer. The cofactor is a divalent metal cation.

It carries out the reaction 4-CDP-2-C-methyl-D-erythritol 2-phosphate = 2-C-methyl-D-erythritol 2,4-cyclic diphosphate + CMP. The protein operates within isoprenoid biosynthesis; isopentenyl diphosphate biosynthesis via DXP pathway; isopentenyl diphosphate from 1-deoxy-D-xylulose 5-phosphate: step 4/6. Functionally, involved in the biosynthesis of isopentenyl diphosphate (IPP) and dimethylallyl diphosphate (DMAPP), two major building blocks of isoprenoid compounds. Catalyzes the conversion of 4-diphosphocytidyl-2-C-methyl-D-erythritol 2-phosphate (CDP-ME2P) to 2-C-methyl-D-erythritol 2,4-cyclodiphosphate (ME-CPP) with a corresponding release of cytidine 5-monophosphate (CMP). In Hydrogenobaculum sp. (strain Y04AAS1), this protein is 2-C-methyl-D-erythritol 2,4-cyclodiphosphate synthase.